The following is a 302-amino-acid chain: Recombination-associated protein RdgC (302 aa).

It belongs to the RdgC family.

It is found in the cytoplasm. Its subcellular location is the nucleoid. Functionally, may be involved in recombination. This chain is Recombination-associated protein RdgC, found in Actinobacillus pleuropneumoniae serotype 7 (strain AP76).